Here is a 249-residue protein sequence, read N- to C-terminus: 2,3-bisphosphoglycerate-dependent phosphoglycerate mutase (249 aa).

Substrate is bound by residues 8 to 15, 21 to 22, Arg60, 87 to 90, Lys98, 114 to 115, and 183 to 184; these read RHGESTWN, TG, ERHY, RR, and GN. His9 serves as the catalytic Tele-phosphohistidine intermediate. Glu87 functions as the Proton donor/acceptor in the catalytic mechanism.

The protein belongs to the phosphoglycerate mutase family. BPG-dependent PGAM subfamily. In terms of assembly, homodimer.

The catalysed reaction is (2R)-2-phosphoglycerate = (2R)-3-phosphoglycerate. The protein operates within carbohydrate degradation; glycolysis; pyruvate from D-glyceraldehyde 3-phosphate: step 3/5. Its function is as follows. Catalyzes the interconversion of 2-phosphoglycerate and 3-phosphoglycerate. This is 2,3-bisphosphoglycerate-dependent phosphoglycerate mutase from Aromatoleum aromaticum (strain DSM 19018 / LMG 30748 / EbN1) (Azoarcus sp. (strain EbN1)).